The primary structure comprises 152 residues: MTSTLNTLKSNSGSRKKKLRKGRGIAAGQGASCGFGMRGQKSRSGRPTRPGFEGGQMPLYRRVPKLKHFEIINQKNFSIINLDKLKDFNDNDTVNLDSLVKKGLIFKPKFPLKILGNGKVNVKLTVQAHAFTKVAKQKIEDAGGSCELLNNK.

The segment at 1–57 (MTSTLNTLKSNSGSRKKKLRKGRGIAAGQGASCGFGMRGQKSRSGRPTRPGFEGGQM) is disordered. Over residues 14–23 (SRKKKLRKGR) the composition is skewed to basic residues. A compositionally biased stretch (gly residues) spans 25–37 (IAAGQGASCGFGM).

Belongs to the universal ribosomal protein uL15 family. Part of the 50S ribosomal subunit.

Its function is as follows. Binds to the 23S rRNA. This chain is Large ribosomal subunit protein uL15, found in Prochlorococcus marinus (strain MIT 9312).